Consider the following 399-residue polypeptide: Succinate--CoA ligase [ADP-forming] subunit beta (399 aa).

One can recognise an ATP-grasp domain in the interval 9–254 (KELLAKFGVA…ETEEDPAEIE (246 aa)). ATP is bound by residues Lys46, 53 to 55 (GRG), Ala112, and Glu117. The Mg(2+) site is built by Asn209 and Asp223. Residues Asn274 and 331–333 (GIM) contribute to the substrate site.

It belongs to the succinate/malate CoA ligase beta subunit family. As to quaternary structure, heterotetramer of two alpha and two beta subunits. Mg(2+) is required as a cofactor.

The enzyme catalyses succinate + ATP + CoA = succinyl-CoA + ADP + phosphate. The catalysed reaction is GTP + succinate + CoA = succinyl-CoA + GDP + phosphate. It functions in the pathway carbohydrate metabolism; tricarboxylic acid cycle; succinate from succinyl-CoA (ligase route): step 1/1. Its function is as follows. Succinyl-CoA synthetase functions in the citric acid cycle (TCA), coupling the hydrolysis of succinyl-CoA to the synthesis of either ATP or GTP and thus represents the only step of substrate-level phosphorylation in the TCA. The beta subunit provides nucleotide specificity of the enzyme and binds the substrate succinate, while the binding sites for coenzyme A and phosphate are found in the alpha subunit. In Rhizorhabdus wittichii (strain DSM 6014 / CCUG 31198 / JCM 15750 / NBRC 105917 / EY 4224 / RW1) (Sphingomonas wittichii), this protein is Succinate--CoA ligase [ADP-forming] subunit beta.